The sequence spans 444 residues: N-succinylarginine dihydrolase (444 aa).

Substrate contacts are provided by residues 19–28, N110, and 137–138; these read AGLSFGNVAS and HR. E174 is an active-site residue. A substrate-binding site is contributed by R214. H250 is an active-site residue. Residues D252 and N362 each contribute to the substrate site. Catalysis depends on C368, which acts as the Nucleophile.

The protein belongs to the succinylarginine dihydrolase family. As to quaternary structure, homodimer.

It catalyses the reaction N(2)-succinyl-L-arginine + 2 H2O + 2 H(+) = N(2)-succinyl-L-ornithine + 2 NH4(+) + CO2. The protein operates within amino-acid degradation; L-arginine degradation via AST pathway; L-glutamate and succinate from L-arginine: step 2/5. Functionally, catalyzes the hydrolysis of N(2)-succinylarginine into N(2)-succinylornithine, ammonia and CO(2). This Shewanella amazonensis (strain ATCC BAA-1098 / SB2B) protein is N-succinylarginine dihydrolase.